The primary structure comprises 354 residues: MTTLKNDRYLKALLREPVDMTPVWMMRQAGRYLPEYKATRAEAGDFMSLCRNADLACEVTLQPLRRYELDAAILFSDILTIPDAMGLGLTFGAGEGPKFDRPIETKSAVENLPIPDPEQELQYVMNAVRTIRRELNGEVPLIGFSGSPWTLATYMVEGGSTKAFTKIKKMMYAEPKLLHKLLDKVADSVVLYLNAQIKAGAQAVMIFDTWGGVLGHREYLDFSLQYMHKIVNGLIRENDGRKVPVTLFTKGGGLWLDAIADTGCDAIGLDWTVNLAQAKAQVGHKVALQGNMDPSVLYAAPERIEQEVRSILADFGEGSGHVFNLGHGIHQDVPVESPKVFVDAIHQYSKPYHK.

Residues 27 to 31, Asp-77, Tyr-154, Thr-209, and His-327 contribute to the substrate site; that span reads RQAGR.

It belongs to the uroporphyrinogen decarboxylase family. Homodimer.

The protein localises to the cytoplasm. It carries out the reaction uroporphyrinogen III + 4 H(+) = coproporphyrinogen III + 4 CO2. It functions in the pathway porphyrin-containing compound metabolism; protoporphyrin-IX biosynthesis; coproporphyrinogen-III from 5-aminolevulinate: step 4/4. In terms of biological role, catalyzes the decarboxylation of four acetate groups of uroporphyrinogen-III to yield coproporphyrinogen-III. The chain is Uroporphyrinogen decarboxylase from Mannheimia succiniciproducens (strain KCTC 0769BP / MBEL55E).